The primary structure comprises 174 residues: ATP-dependent protease subunit HslV (174 aa).

Threonine 2 is a catalytic residue. Glycine 157, cysteine 160, and threonine 163 together coordinate Na(+).

This sequence belongs to the peptidase T1B family. HslV subfamily. In terms of assembly, a double ring-shaped homohexamer of HslV is capped on each side by a ring-shaped HslU homohexamer. The assembly of the HslU/HslV complex is dependent on binding of ATP.

Its subcellular location is the cytoplasm. The enzyme catalyses ATP-dependent cleavage of peptide bonds with broad specificity.. With respect to regulation, allosterically activated by HslU binding. Its function is as follows. Protease subunit of a proteasome-like degradation complex believed to be a general protein degrading machinery. This chain is ATP-dependent protease subunit HslV, found in Yersinia enterocolitica serotype O:8 / biotype 1B (strain NCTC 13174 / 8081).